Consider the following 281-residue polypeptide: Ethylene-inducing xylanase 1 (281 aa).

The signal sequence occupies residues 1-19 (MVSYKAFLITLAAVTRVLT). The N-linked (GlcNAc...) asparagine glycan is linked to N23. The GH11 domain maps to 32–220 (SGTPSSTGTS…SSGSSDITVG (189 aa)). E116 serves as the catalytic Nucleophile. E207 serves as the catalytic Proton donor. Positions 246-281 (TCGALYSQCGGTGFTGSQCCASGTCKYANSYYSQCL) constitute a CBM1 domain.

The protein belongs to the glycosyl hydrolase 11 (cellulase G) family.

It catalyses the reaction Endohydrolysis of (1-&gt;4)-beta-D-xylosidic linkages in xylans.. Its pathway is glycan degradation; xylan degradation. Its function is as follows. Endo-1,4-beta-xylanase involved in the hydrolysis of xylan, a major structural heterogeneous polysaccharide found in plant biomass representing the second most abundant polysaccharide in the biosphere, after cellulose. May act as an elicitor of plant defense responses in certain plants but does not exhibit any cell death when transiently expressed in N.benthamiana. The polypeptide is Ethylene-inducing xylanase 1 (Botryotinia fuckeliana (strain B05.10) (Noble rot fungus)).